A 152-amino-acid polypeptide reads, in one-letter code: MTSTLNTLKSNLGSRKKKLRKGRGIAAGQGASCGFGMRGQKSRSGRPTRPGFEGGQMPLYRRVPKLKHFEIINQKNYSIVNLSKLSEFKDNEIVNIDSLVKKKLLFKPKFPLKILGNGVVKVKLKVQAHAFTKVAQEKIESAGGSCEVLNNK.

Positions 1-56 (MTSTLNTLKSNLGSRKKKLRKGRGIAAGQGASCGFGMRGQKSRSGRPTRPGFEGGQ) are disordered. Over residues 14-23 (SRKKKLRKGR) the composition is skewed to basic residues. A compositionally biased stretch (gly residues) spans 25–37 (IAAGQGASCGFGM).

This sequence belongs to the universal ribosomal protein uL15 family. As to quaternary structure, part of the 50S ribosomal subunit.

In terms of biological role, binds to the 23S rRNA. The chain is Large ribosomal subunit protein uL15 from Prochlorococcus marinus (strain MIT 9515).